A 316-amino-acid chain; its full sequence is Cell division protein FtsQ (316 aa).

A disordered region spans residues 1–34 (MAKAARRTKSAPARRSPRRHARQTGATIRRPKRP). Topologically, residues 1–61 (MAKAARRTKS…HPLLKQMAKR (61 aa)) are cytoplasmic. Residues 62–80 (LLLILVIVGFLAGLWAARW) traverse the membrane as a helical segment. At 81–316 (PQLLATKTGE…AADPLVSDRI (236 aa)) the chain is on the periplasmic side. A POTRA domain is found at 97 to 165 (FSVRHVEIVG…DTLVVDIVER (69 aa)). Positions 295–316 (PEPVKKATKPAKAADPLVSDRI) are disordered.

The protein belongs to the FtsQ/DivIB family. FtsQ subfamily.

The protein resides in the cell inner membrane. Functionally, essential cell division protein. The sequence is that of Cell division protein FtsQ from Zymomonas mobilis subsp. mobilis (strain ATCC 31821 / ZM4 / CP4).